A 161-amino-acid chain; its full sequence is UPF0178 protein Rsph17025_3122 (161 aa).

The protein belongs to the UPF0178 family.

This is UPF0178 protein Rsph17025_3122 from Cereibacter sphaeroides (strain ATCC 17025 / ATH 2.4.3) (Rhodobacter sphaeroides).